The chain runs to 169 residues: Ribosome maturation factor RimM (169 aa).

In terms of domain architecture, PRC barrel spans 93 to 166; sequence GEHEFYYHEI…RIQITPLPGL (74 aa).

Belongs to the RimM family. As to quaternary structure, binds ribosomal protein uS19.

The protein resides in the cytoplasm. An accessory protein needed during the final step in the assembly of 30S ribosomal subunit, possibly for assembly of the head region. Essential for efficient processing of 16S rRNA. May be needed both before and after RbfA during the maturation of 16S rRNA. It has affinity for free ribosomal 30S subunits but not for 70S ribosomes. This chain is Ribosome maturation factor RimM, found in Exiguobacterium sibiricum (strain DSM 17290 / CCUG 55495 / CIP 109462 / JCM 13490 / 255-15).